The primary structure comprises 458 residues: GTPase Der (458 aa).

EngA-type G domains lie at 9–171 (KTIA…DLNQ) and 197–368 (IQVG…ECFS). Residues 15–22 (GQPNVGKS), 62–66 (DTGGM), 123–126 (NKID), 203–210 (GRVNVGKS), 250–254 (DTAGI), and 314–317 (NKWD) contribute to the GTP site. The region spanning 369–453 (KRIPTSLLNS…PLILNAKDKK (85 aa)) is the KH-like domain.

It belongs to the TRAFAC class TrmE-Era-EngA-EngB-Septin-like GTPase superfamily. EngA (Der) GTPase family. Associates with the 50S ribosomal subunit.

Its function is as follows. GTPase that plays an essential role in the late steps of ribosome biogenesis. The protein is GTPase Der of Helicobacter pylori (strain ATCC 700392 / 26695) (Campylobacter pylori).